The chain runs to 474 residues: Replication-associated protein (474 aa).

The Nuclear localization signal signature appears at 248-255; that stretch reads GKRFQEDR. The tract at residues 455–474 is disordered; that stretch reads AFAPGFSLTSEPEPKRRRFF.

It is found in the host nucleus. In terms of biological role, plays an essential for the replication of viral DNA. Presumably cleaves viral genomic dsRNA replicative form to initiate rolling circle replication. The polypeptide is Replication-associated protein (Avon-Heathcote Estuary associated kieseladnavirus (AHEaBV)).